Reading from the N-terminus, the 179-residue chain is Translation initiation factor IF-3 (179 aa).

It belongs to the IF-3 family. Monomer.

The protein resides in the cytoplasm. Its function is as follows. IF-3 binds to the 30S ribosomal subunit and shifts the equilibrium between 70S ribosomes and their 50S and 30S subunits in favor of the free subunits, thus enhancing the availability of 30S subunits on which protein synthesis initiation begins. The protein is Translation initiation factor IF-3 of Buchnera aphidicola subsp. Acyrthosiphon pisum (strain APS) (Acyrthosiphon pisum symbiotic bacterium).